The primary structure comprises 53 residues: Tsetse thrombin inhibitor (53 aa).

The signal sequence occupies residues 1–21 (MKFFTVLFFLLSIIYLIVAAP).

As to expression, expressed at high levels in salivary glands and midguts of adult tsetse flies.

The protein localises to the secreted. Potent and specific inhibitor of human thrombin. It is also a potent inhibitor of thrombin-induced platelet aggregation. It is capable of antagonizing host hemostasis and facilitating blood feeding. The sequence is that of Tsetse thrombin inhibitor (TTI) from Glossina morsitans morsitans (Savannah tsetse fly).